The primary structure comprises 383 residues: UDP-N-acetylenolpyruvoylglucosamine reductase (383 aa).

Residues 1-13 (MRTRRDVPADRSG) show a composition bias toward basic and acidic residues. Positions 1 to 26 (MRTRRDVPADRSGRSRVSRHPGLSVP) are disordered. An FAD-binding PCMH-type domain is found at 49-215 (LGGPATRLLT…LRVRFELENA (167 aa)). Residue R192 is part of the active site. Residue S271 is the Proton donor of the active site. The active site involves E375.

The protein belongs to the MurB family. It depends on FAD as a cofactor.

It is found in the cytoplasm. The enzyme catalyses UDP-N-acetyl-alpha-D-muramate + NADP(+) = UDP-N-acetyl-3-O-(1-carboxyvinyl)-alpha-D-glucosamine + NADPH + H(+). It participates in cell wall biogenesis; peptidoglycan biosynthesis. Functionally, cell wall formation. This chain is UDP-N-acetylenolpyruvoylglucosamine reductase, found in Streptomyces coelicolor (strain ATCC BAA-471 / A3(2) / M145).